We begin with the raw amino-acid sequence, 120 residues long: Small ribosomal subunit protein uS13m (120 aa).

The protein belongs to the universal ribosomal protein uS13 family. As to quaternary structure, part of the small ribosomal subunit.

Its subcellular location is the mitochondrion. Its function is as follows. Located at the top of the head of the small subunit, it contacts several helices of the 18S rRNA. The sequence is that of Small ribosomal subunit protein uS13m (RPS13) from Marchantia polymorpha (Common liverwort).